The chain runs to 291 residues: Nucleotide-binding protein Athe_0320 (291 aa).

9 to 16 (GMSGAGKS) contributes to the ATP binding site. 60–63 (DIRG) lines the GTP pocket.

It belongs to the RapZ-like family.

Functionally, displays ATPase and GTPase activities. The protein is Nucleotide-binding protein Athe_0320 of Caldicellulosiruptor bescii (strain ATCC BAA-1888 / DSM 6725 / KCTC 15123 / Z-1320) (Anaerocellum thermophilum).